The chain runs to 342 residues: Methionine import ATP-binding protein MetN 2 (342 aa).

The ABC transporter domain occupies 2–241; sequence ISIEGLSKVF…PKQLVTRKFV (240 aa). ATP is bound at residue 38-45; that stretch reads GYSGAGKS.

Belongs to the ABC transporter superfamily. Methionine importer (TC 3.A.1.24) family. In terms of assembly, the complex is composed of two ATP-binding proteins (MetN), two transmembrane proteins (MetI) and a solute-binding protein (MetQ).

It localises to the cell membrane. It carries out the reaction L-methionine(out) + ATP + H2O = L-methionine(in) + ADP + phosphate + H(+). The enzyme catalyses D-methionine(out) + ATP + H2O = D-methionine(in) + ADP + phosphate + H(+). Part of the ABC transporter complex MetNIQ involved in methionine import. Responsible for energy coupling to the transport system. This Oceanobacillus iheyensis (strain DSM 14371 / CIP 107618 / JCM 11309 / KCTC 3954 / HTE831) protein is Methionine import ATP-binding protein MetN 2.